Consider the following 93-residue polypeptide: Mitochondrial import inner membrane translocase subunit Tim10-A (93 aa).

Positions 32 to 57 (CHKKCVPPHYKEAELSKGESVCLDRC) match the Twin CX3C motif motif. Cystine bridges form between cysteine 32–cysteine 57 and cysteine 36–cysteine 53.

Belongs to the small Tim family. Heterohexamer; composed of 3 copies of TIMM9 and 3 copies of TIMM10/TIM10A, named soluble 70 kDa complex. The complex forms a 6-bladed alpha-propeller structure and associates with the TIMM22 component of the TIM22 complex. Interacts with multi-pass transmembrane proteins in transit.

It is found in the mitochondrion inner membrane. Mitochondrial intermembrane chaperone that participates in the import and insertion of multi-pass transmembrane proteins into the mitochondrial inner membrane. May also be required for the transfer of beta-barrel precursors from the TOM complex to the sorting and assembly machinery (SAM complex) of the outer membrane. Acts as a chaperone-like protein that protects the hydrophobic precursors from aggregation and guide them through the mitochondrial intermembrane space. The chain is Mitochondrial import inner membrane translocase subunit Tim10-A (timm10-a) from Xenopus laevis (African clawed frog).